A 147-amino-acid polypeptide reads, in one-letter code: Hemoglobin subunit delta (147 aa).

Residues 3–147 (NLTAAEKTQV…VANALAHKYH (145 aa)) enclose the Globin domain. H64 and H93 together coordinate heme b.

This sequence belongs to the globin family. In terms of assembly, heterotetramer of two delta chains and two alpha chains. As to expression, red blood cells.

This is Hemoglobin subunit delta (HBD) from Elephas maximus (Indian elephant).